The primary structure comprises 228 residues: Large ribosomal subunit protein uL3 (228 aa).

Residues 157–176 (CHRHAGGTGMSASPSRTFKG) are disordered.

This sequence belongs to the universal ribosomal protein uL3 family. In terms of assembly, part of the 50S ribosomal subunit. Forms a cluster with proteins L14 and L19.

Its function is as follows. One of the primary rRNA binding proteins, it binds directly near the 3'-end of the 23S rRNA, where it nucleates assembly of the 50S subunit. This chain is Large ribosomal subunit protein uL3, found in Rhodopirellula baltica (strain DSM 10527 / NCIMB 13988 / SH1).